The chain runs to 320 residues: Large ribosomal subunit protein uL10y (320 aa).

The segment at 289 to 320 (AGGGAPAAAKVEEKEESDEEDYGGDFGLFDEE) is disordered. Over residues 302–320 (KEESDEEDYGGDFGLFDEE) the composition is skewed to acidic residues. Ser-305 is modified (phosphoserine). Phosphotyrosine is present on Tyr-310.

This sequence belongs to the universal ribosomal protein uL10 family. P0 forms a pentameric complex by interaction with dimers of P1 and P2.

Ribosomal protein P0 is the functional equivalent of E.coli protein L10. The polypeptide is Large ribosomal subunit protein uL10y (RPP0B) (Arabidopsis thaliana (Mouse-ear cress)).